We begin with the raw amino-acid sequence, 340 residues long: Proline-rich transmembrane protein 2 (340 aa).

Residues 1 to 261 (MAASSSEISE…AGPGVEGGEG (261 aa)) form a disordered region. Over 1 to 268 (MAASSSEISE…GEGTQKPRDY (268 aa)) the chain is Cytoplasmic. Residues 9–18 (SEMKGVEESP) are compositionally biased toward basic and acidic residues. The residue at position 28 (Ser-28) is a Phosphoserine. Residue Thr-74 is modified to Phosphothreonine. Composition is skewed to pro residues over residues 131–155 (PPEP…PKPA) and 197–207 (APEPHSPPSKK). Phosphoserine is present on Ser-238. Arg-240 carries the post-translational modification Omega-N-methylarginine. A phosphoserine mark is found at Ser-248 and Ser-249. Positions 269–289 (IILAILSCFCPMWPVNIVAFA) form an intramembrane region, helical. At 290–317 (YAVMSRNSLQQGDVDGAQRLGRVAKLLS) the chain is on the cytoplasmic side. Residues 318-338 (IVALVGGVLIIIASCVINLGV) form a helical membrane-spanning segment. At 339 to 340 (YK) the chain is on the extracellular side.

The protein belongs to the CD225/Dispanin family. As to quaternary structure, component of the outer core of AMPAR complex. AMPAR complex consists of an inner core made of 4 pore-forming GluA/GRIA proteins (GRIA1, GRIA2, GRIA3 and GRIA4) and 4 major auxiliary subunits arranged in a twofold symmetry. One of the two pairs of distinct binding sites is occupied either by CNIH2, CNIH3 or CACNG2, CACNG3. The other harbors CACNG2, CACNG3, CACNG4, CACNG8 or GSG1L. This inner core of AMPAR complex is complemented by outer core constituents binding directly to the GluA/GRIA proteins at sites distinct from the interaction sites of the inner core constituents. Outer core constituents include at least PRRT1, PRRT2, CKAMP44/SHISA9, FRRS1L and NRN1. The proteins of the inner and outer core serve as a platform for other, more peripherally associated AMPAR constituents. Alone or in combination, these auxiliary subunits control the gating and pharmacology of the AMPAR complex and profoundly impact their biogenesis and protein processing. Interacts with intersectin 1/ITSN1. Interacts with SNARE complex components, including SNAP25, STX1A, SYT1 and SYT2; this interaction may inhibit SNARE complex formation.

The protein localises to the cell membrane. The protein resides in the presynaptic cell membrane. It localises to the synapse. It is found in the cell projection. Its subcellular location is the axon. The protein localises to the cytoplasmic vesicle. The protein resides in the secretory vesicle. It localises to the synaptic vesicle membrane. It is found in the postsynaptic density membrane. Its subcellular location is the dendritic spine. As a component of the outer core of AMPAR complex, may be involved in synaptic transmission in the central nervous system. In hippocampal neurons, in presynaptic terminals, plays an important role in the final steps of neurotransmitter release, possibly by regulating Ca(2+)-sensing. In the cerebellum, may inhibit SNARE complex formation and down-regulate short-term facilitation. This Homo sapiens (Human) protein is Proline-rich transmembrane protein 2 (PRRT2).